The chain runs to 123 residues: Fluoride-specific ion channel FluC (123 aa).

The next 4 helical transmembrane spans lie at 7 to 27 (LLLI…SGIL), 39 to 59 (LVNS…FFGF), 67 to 87 (IFLG…SYET), and 100 to 120 (FMNV…GFIL). 2 residues coordinate Na(+): Gly75 and Ser78.

It belongs to the fluoride channel Fluc/FEX (TC 1.A.43) family.

It is found in the cell membrane. The enzyme catalyses fluoride(in) = fluoride(out). Its activity is regulated as follows. Na(+) is not transported, but it plays an essential structural role and its presence is essential for fluoride channel function. Fluoride-specific ion channel. Important for reducing fluoride concentration in the cell, thus reducing its toxicity. This chain is Fluoride-specific ion channel FluC, found in Pyrococcus abyssi (strain GE5 / Orsay).